The sequence spans 265 residues: Thiazole synthase (265 aa).

Lys103 (schiff-base intermediate with DXP) is an active-site residue. 1-deoxy-D-xylulose 5-phosphate contacts are provided by residues Gly164, 190–191 (AG), and 212–213 (NT).

The protein belongs to the ThiG family. Homotetramer. Forms heterodimers with either ThiH or ThiS.

Its subcellular location is the cytoplasm. It carries out the reaction [ThiS sulfur-carrier protein]-C-terminal-Gly-aminoethanethioate + 2-iminoacetate + 1-deoxy-D-xylulose 5-phosphate = [ThiS sulfur-carrier protein]-C-terminal Gly-Gly + 2-[(2R,5Z)-2-carboxy-4-methylthiazol-5(2H)-ylidene]ethyl phosphate + 2 H2O + H(+). It participates in cofactor biosynthesis; thiamine diphosphate biosynthesis. In terms of biological role, catalyzes the rearrangement of 1-deoxy-D-xylulose 5-phosphate (DXP) to produce the thiazole phosphate moiety of thiamine. Sulfur is provided by the thiocarboxylate moiety of the carrier protein ThiS. In vitro, sulfur can be provided by H(2)S. The chain is Thiazole synthase from Bordetella avium (strain 197N).